The chain runs to 312 residues: Acetylglutamate kinase (312 aa).

Residues 76-77 (GG), Arg-98, and Asn-199 contribute to the substrate site.

The protein belongs to the acetylglutamate kinase family. ArgB subfamily.

The protein resides in the cytoplasm. It carries out the reaction N-acetyl-L-glutamate + ATP = N-acetyl-L-glutamyl 5-phosphate + ADP. It participates in amino-acid biosynthesis; L-arginine biosynthesis; N(2)-acetyl-L-ornithine from L-glutamate: step 2/4. Functionally, catalyzes the ATP-dependent phosphorylation of N-acetyl-L-glutamate. The protein is Acetylglutamate kinase of Beutenbergia cavernae (strain ATCC BAA-8 / DSM 12333 / CCUG 43141 / JCM 11478 / NBRC 16432 / NCIMB 13614 / HKI 0122).